A 70-amino-acid chain; its full sequence is Putative membrane protein insertion efficiency factor (70 aa).

The protein belongs to the UPF0161 family.

The protein resides in the cell membrane. In terms of biological role, could be involved in insertion of integral membrane proteins into the membrane. In Symbiobacterium thermophilum (strain DSM 24528 / JCM 14929 / IAM 14863 / T), this protein is Putative membrane protein insertion efficiency factor.